The primary structure comprises 452 residues: Phosphoglucosamine mutase (452 aa).

Residue serine 104 is the Phosphoserine intermediate of the active site. The Mg(2+) site is built by serine 104, aspartate 246, aspartate 248, and aspartate 250. Serine 104 bears the Phosphoserine mark.

Belongs to the phosphohexose mutase family. Mg(2+) serves as cofactor. In terms of processing, activated by phosphorylation.

The catalysed reaction is alpha-D-glucosamine 1-phosphate = D-glucosamine 6-phosphate. In terms of biological role, catalyzes the conversion of glucosamine-6-phosphate to glucosamine-1-phosphate. This Streptomyces coelicolor (strain ATCC BAA-471 / A3(2) / M145) protein is Phosphoglucosamine mutase.